We begin with the raw amino-acid sequence, 192 residues long: MCFSQAETLVNYSFGTCQHRKIFPHFFPSDLLGNKFLPIRGVPHRGPGCYIAEESKDLAYSLAKIPTSIKGYGFGARTAVRFKPKNKDVTPYPGMYQTVNLQEQTHKPNFAPFNTLSPRFRTYSKDPCYPGPGTYKLEKKEPQKVTWPMKFGSPDWSQVPCLQKRTLKTELSTDKDFRKHRNRLAYLSLYYN.

As to quaternary structure, interacts with proteins involved in ciliary transport, including ARL13B, CETN1, KIF3A, RAB6A, RAB8A, TUBB1 and TUBG1. Interacts with AURKA.

The protein resides in the cytoplasmic vesicle. It is found in the golgi apparatus. The protein localises to the trans-Golgi network. Its subcellular location is the cytoplasm. Functionally, during primary cilia disassembly, involved in cilia disassembly. Required specifically to control cilia retraction as well as the liberation and duplication of the basal body/centrosome. May act by stimulating AURKA activity at the basal body in a cell cycle-dependent manner. The polypeptide is Ciliary microtubule-associated protein 3 (CIMAP3) (Bos taurus (Bovine)).